The primary structure comprises 631 residues: Phosphomethylpyrimidine synthase (631 aa).

Substrate contacts are provided by residues N239, M268, Y297, H333, 353–355 (SRG), 394–397 (DGLR), and E433. Zn(2+) is bound at residue H437. Y460 contacts substrate. Position 501 (H501) interacts with Zn(2+). Positions 581, 584, and 589 each coordinate [4Fe-4S] cluster.

It belongs to the ThiC family. Homodimer. Requires [4Fe-4S] cluster as cofactor.

The enzyme catalyses 5-amino-1-(5-phospho-beta-D-ribosyl)imidazole + S-adenosyl-L-methionine = 4-amino-2-methyl-5-(phosphooxymethyl)pyrimidine + CO + 5'-deoxyadenosine + formate + L-methionine + 3 H(+). The protein operates within cofactor biosynthesis; thiamine diphosphate biosynthesis. In terms of biological role, catalyzes the synthesis of the hydroxymethylpyrimidine phosphate (HMP-P) moiety of thiamine from aminoimidazole ribotide (AIR) in a radical S-adenosyl-L-methionine (SAM)-dependent reaction. This chain is Phosphomethylpyrimidine synthase, found in Escherichia coli O139:H28 (strain E24377A / ETEC).